A 157-amino-acid polypeptide reads, in one-letter code: Phospholipase A2 phaiodactylipin (157 aa).

Residues tryptophan 34 and glycine 36 each coordinate Ca(2+). 5 disulfides stabilise this stretch: cysteine 35/cysteine 56, cysteine 55/cysteine 94, cysteine 62/cysteine 87, cysteine 85/cysteine 127, and cysteine 132/cysteine 143. Asparagine 43 is a glycosylation site (N-linked (GlcNAc...) asparagine). Histidine 59 is an active-site residue. Ca(2+) is bound at residue aspartate 60. Aspartate 88 is an active-site residue. Asparagine 101 carries N-linked (GlcNAc...) asparagine glycosylation. Positions 134 to 139 (DEKSAR) are cleaved as a propeptide — removed in mature form. Residue asparagine 153 is glycosylated (N-linked (GlcNAc...) asparagine).

It belongs to the phospholipase A2 family. Group III subfamily. Heterodimer composed of a small subunit and a large subunit; disulfide-linked. It depends on Ca(2+) as a cofactor. Expressed by the venom gland.

It is found in the secreted. The catalysed reaction is a 1,2-diacyl-sn-glycero-3-phosphocholine + H2O = a 1-acyl-sn-glycero-3-phosphocholine + a fatty acid + H(+). In terms of biological role, scorpion venom phospholipase A2 (PLA2) that is lethal to crickets and crustaceae. Causes inflammation in mice and lysis of human erythrocytes. Has a mild anticoagulant effect on human platelets. PLA2 catalyzes the calcium-dependent hydrolysis of the 2-acyl groups in 3-sn-phosphoglycerides. This is Phospholipase A2 phaiodactylipin from Anuroctonus phaiodactylus (Mafia scorpion).